A 144-amino-acid polypeptide reads, in one-letter code: Lysozyme C II (144 aa).

Residues 1 to 15 (MRAVVVLLLVAVASA) form the signal peptide. Residues 16–144 (KVYDRCELAR…LRSYVAGCGV (129 aa)) form the C-type lysozyme domain. Cystine bridges form between Cys21/Cys142, Cys45/Cys130, Cys79/Cys95, and Cys91/Cys109. Active-site residues include Glu50 and Asp67.

It is found in the secreted. The catalysed reaction is Hydrolysis of (1-&gt;4)-beta-linkages between N-acetylmuramic acid and N-acetyl-D-glucosamine residues in a peptidoglycan and between N-acetyl-D-glucosamine residues in chitodextrins.. Its function is as follows. Lysozymes have primarily a bacteriolytic function; those in tissues and body fluids are associated with the monocyte-macrophage system and enhance the activity of immunoagents. Has antibacterial activity against the Gram positive bacterium P.citreus. Has no antibacterial activity against the Gram negative bacteria E.coli and Y.ruckeri. Does not have hemolytic activity against trout erythrocytes. The protein is Lysozyme C II of Oncorhynchus mykiss (Rainbow trout).